The following is a 138-amino-acid chain: Large-conductance mechanosensitive channel (138 aa).

3 consecutive transmembrane segments (helical) span residues 15–35 (VDLAIGVIIGGAFGGLVNSIV), 38–58 (IIMPIIGLITGGIDFSNMFIQ), and 80–100 (GNFITLLINFMIIAWVLFLVV).

This sequence belongs to the MscL family. In terms of assembly, homopentamer.

The protein resides in the cell inner membrane. Channel that opens in response to stretch forces in the membrane lipid bilayer. May participate in the regulation of osmotic pressure changes within the cell. This chain is Large-conductance mechanosensitive channel, found in Brucella ovis (strain ATCC 25840 / 63/290 / NCTC 10512).